The sequence spans 405 residues: uncharacterized protein (405 aa).

This is an uncharacterized protein from Schizosaccharomyces pombe (strain 972 / ATCC 24843) (Fission yeast).